A 727-amino-acid chain; its full sequence is 1,4-alpha-glucan branching enzyme GlgB (727 aa).

Asp-405 (nucleophile) is an active-site residue. Catalysis depends on Glu-458, which acts as the Proton donor.

Belongs to the glycosyl hydrolase 13 family. GlgB subfamily. Monomer.

It catalyses the reaction Transfers a segment of a (1-&gt;4)-alpha-D-glucan chain to a primary hydroxy group in a similar glucan chain.. The protein operates within glycan biosynthesis; glycogen biosynthesis. In terms of biological role, catalyzes the formation of the alpha-1,6-glucosidic linkages in glycogen by scission of a 1,4-alpha-linked oligosaccharide from growing alpha-1,4-glucan chains and the subsequent attachment of the oligosaccharide to the alpha-1,6 position. The chain is 1,4-alpha-glucan branching enzyme GlgB from Yersinia pestis bv. Antiqua (strain Antiqua).